A 268-amino-acid chain; its full sequence is MTAQQPPRLLQGIPLAVRKLQKTFGSRQVLREIDLHIPAGQFVAVVGRSGCGKSTLLRLLAGLDQPSAGELLAGSAPLSAAIEDTRLMFQEARLLPWKKVIDNVGLGLKGNWRPQALQALEAVGLADRAQEWPAALSGGQKQRVALARALIHQPRLLLLDEPLGALDALTRIEMQQLIERLWQQHGFTVLLVTHDVSEAVAIADRVILIEDGEVGLDLHVELPRPRVRGSHRLAALETEVLNRVLSLPGSPPEPEPVSPLPTQLRWAL.

The region spanning 15–236 (LAVRKLQKTF…VRGSHRLAAL (222 aa)) is the ABC transporter domain. 47–54 (GRSGCGKS) contacts ATP.

It belongs to the ABC transporter superfamily. Aliphatic sulfonates importer (TC 3.A.1.17.2) family. The complex is composed of two ATP-binding proteins (SsuB), two transmembrane proteins (SsuC) and a solute-binding protein (SsuA).

It is found in the cell inner membrane. It catalyses the reaction ATP + H2O + aliphatic sulfonate-[sulfonate-binding protein]Side 1 = ADP + phosphate + aliphatic sulfonateSide 2 + [sulfonate-binding protein]Side 1.. Functionally, part of the ABC transporter complex SsuABC involved in aliphatic sulfonates import. Responsible for energy coupling to the transport system. This Pseudomonas fluorescens (strain ATCC BAA-477 / NRRL B-23932 / Pf-5) protein is Aliphatic sulfonates import ATP-binding protein SsuB 2.